Reading from the N-terminus, the 246-residue chain is DNA repair protein RecO (246 aa).

The protein belongs to the RecO family.

Involved in DNA repair and RecF pathway recombination. In Alkaliphilus metalliredigens (strain QYMF), this protein is DNA repair protein RecO.